A 90-amino-acid polypeptide reads, in one-letter code: Small ribosomal subunit protein uS15 (90 aa).

The protein belongs to the universal ribosomal protein uS15 family. Part of the 30S ribosomal subunit. Forms a bridge to the 50S subunit in the 70S ribosome, contacting the 23S rRNA.

Functionally, one of the primary rRNA binding proteins, it binds directly to 16S rRNA where it helps nucleate assembly of the platform of the 30S subunit by binding and bridging several RNA helices of the 16S rRNA. In terms of biological role, forms an intersubunit bridge (bridge B4) with the 23S rRNA of the 50S subunit in the ribosome. This chain is Small ribosomal subunit protein uS15, found in Thermotoga maritima (strain ATCC 43589 / DSM 3109 / JCM 10099 / NBRC 100826 / MSB8).